A 124-amino-acid chain; its full sequence is Fluoride-specific ion channel FluC 1 (124 aa).

Transmembrane regions (helical) follow at residues 1–21, 30–50, 56–76, and 102–122; these read MNWLLVIAGAMVGAPLRYVTD, AVFPWGTFAINVTGCLVLGLL, AGVASPHLELLLGTGLCGALT, and IASVAAGLGAAFAGVWFAQAL. The Na(+) site is built by Gly-73 and Thr-76.

Belongs to the fluoride channel Fluc/FEX (TC 1.A.43) family.

It is found in the cell membrane. It catalyses the reaction fluoride(in) = fluoride(out). Its activity is regulated as follows. Na(+) is not transported, but it plays an essential structural role and its presence is essential for fluoride channel function. Functionally, fluoride-specific ion channel. Important for reducing fluoride concentration in the cell, thus reducing its toxicity. The protein is Fluoride-specific ion channel FluC 1 of Streptomyces avermitilis (strain ATCC 31267 / DSM 46492 / JCM 5070 / NBRC 14893 / NCIMB 12804 / NRRL 8165 / MA-4680).